The primary structure comprises 648 residues: 1-deoxy-D-xylulose-5-phosphate synthase (648 aa).

Residues histidine 73 and 114–116 contribute to the thiamine diphosphate site; that span reads SHA. Aspartate 145 lines the Mg(2+) pocket. Residues 146 to 147, asparagine 175, tyrosine 286, and glutamate 367 contribute to the thiamine diphosphate site; that span reads GA. Asparagine 175 is a binding site for Mg(2+).

It belongs to the transketolase family. DXPS subfamily. As to quaternary structure, homodimer. Mg(2+) serves as cofactor. Requires thiamine diphosphate as cofactor.

It catalyses the reaction D-glyceraldehyde 3-phosphate + pyruvate + H(+) = 1-deoxy-D-xylulose 5-phosphate + CO2. It functions in the pathway metabolic intermediate biosynthesis; 1-deoxy-D-xylulose 5-phosphate biosynthesis; 1-deoxy-D-xylulose 5-phosphate from D-glyceraldehyde 3-phosphate and pyruvate: step 1/1. In terms of biological role, catalyzes the acyloin condensation reaction between C atoms 2 and 3 of pyruvate and glyceraldehyde 3-phosphate to yield 1-deoxy-D-xylulose-5-phosphate (DXP). This chain is 1-deoxy-D-xylulose-5-phosphate synthase, found in Rhodococcus erythropolis (strain PR4 / NBRC 100887).